A 243-amino-acid polypeptide reads, in one-letter code: Terpene cyclase ptmB (243 aa).

Transmembrane regions (helical) follow at residues 19 to 39, 48 to 68, and 78 to 98; these read IANL…VGMI, YGMA…YSLI, and GVFI…IKFA. A glycan (N-linked (GlcNAc...) asparagine) is linked at asparagine 111. 4 helical membrane passes run 112-132, 137-157, 172-194, and 205-225; these read LSLI…ALAA, SLAY…GGLC, LWLS…WMYW, and LVLW…ICYW.

The protein belongs to the paxB family.

The protein localises to the membrane. Its pathway is secondary metabolite biosynthesis. Functionally, terpene cyclase; part of the gene cluster that mediates the biosynthesis of the indole diterpenes penitrems. The geranylgeranyl diphosphate (GGPP) synthase ptmG catalyzes the first step in penitrem biosynthesis via conversion of farnesyl pyrophosphate and isopentyl pyrophosphate into geranylgeranyl pyrophosphate (GGPP). Condensation of indole-3-glycerol phosphate with GGPP by the prenyl transferase ptmC then forms 3-geranylgeranylindole (3-GGI). Epoxidation by the FAD-dependent monooxygenase ptmM leads to a epoxidized-GGI that is substrate of the terpene cyclase ptmB for cyclization to yield paspaline. Paspaline is subsequently converted to 13-desoxypaxilline by the cytochrome P450 monooxygenase ptmP, the latter being then converted to paxilline by the cytochrome P450 monooxygenase ptmQ. Paxilline is converted to beta-paxitriol via C-10 ketoreduction by the short-chain dehydrogenase ptmH which can be monoprenylated at the C-20 by the indole diterpene prenyltransferase ptmD. A two-step elimination (acetylation and elimination) process performed by the O-acetyltransferase ptmV and ptmI leads to the production of the prenylated form of penijanthine. The FAD-linked oxidoreductase ptmO then converts the prenylated form of penijanthine into PC-M5 which is in turn transformed into PC-M4 by the aromatic dimethylallyltransferase ptmE. Five sequential oxidative transformations performed by the cytochrome P450 monooxygenases ptmK, ptmU, ptmL, ptmN and ptmJ yield the various penitrem compounds. PtmK, ptmU and ptmM are involved in the formation of the key bicyclic ring of penitrem C via the formation of the intermediates secopenitrem D and penitrem D. PtmL catalyzes the epoxidation of penitrem D and C to yield penitrem B and F, respectively. PtmJ catalyzes the last benzylic hydroxylation to convert penitrem B to prenitrem E and penitrem F to penitrem A. This Penicillium ochrochloron protein is Terpene cyclase ptmB.